A 493-amino-acid polypeptide reads, in one-letter code: Glutamyl-tRNA(Gln) amidotransferase subunit A (493 aa).

Active-site charge relay system residues include lysine 79 and serine 159. Serine 183 (acyl-ester intermediate) is an active-site residue.

It belongs to the amidase family. GatA subfamily. In terms of assembly, heterotrimer of A, B and C subunits.

The enzyme catalyses L-glutamyl-tRNA(Gln) + L-glutamine + ATP + H2O = L-glutaminyl-tRNA(Gln) + L-glutamate + ADP + phosphate + H(+). Its function is as follows. Allows the formation of correctly charged Gln-tRNA(Gln) through the transamidation of misacylated Glu-tRNA(Gln) in organisms which lack glutaminyl-tRNA synthetase. The reaction takes place in the presence of glutamine and ATP through an activated gamma-phospho-Glu-tRNA(Gln). The chain is Glutamyl-tRNA(Gln) amidotransferase subunit A from Brucella anthropi (strain ATCC 49188 / DSM 6882 / CCUG 24695 / JCM 21032 / LMG 3331 / NBRC 15819 / NCTC 12168 / Alc 37) (Ochrobactrum anthropi).